A 146-amino-acid chain; its full sequence is Hemoglobin subunit beta (146 aa).

Position 1 is a blocked amino end (Thr) (Thr-1). The region spanning 2 to 146 is the Globin domain; that stretch reads HWTAEERHYI…VAHALTLQYH (145 aa). Heme b is bound by residues His-63 and His-92.

Belongs to the globin family. In terms of assembly, heterotetramer of two alpha chains and two beta chains. Red blood cells.

Involved in oxygen transport from the lung to the various peripheral tissues. In Caretta caretta (Loggerhead sea turtle), this protein is Hemoglobin subunit beta (HBB).